Reading from the N-terminus, the 218-residue chain is Small ribosomal subunit protein uS3c (218 aa).

Residues 47 to 118 (VQKNIRISSG…KLNIAITRIS (72 aa)) form the KH type-2 domain.

Belongs to the universal ribosomal protein uS3 family. In terms of assembly, part of the 30S ribosomal subunit.

The protein resides in the plastid. Its subcellular location is the chloroplast. The polypeptide is Small ribosomal subunit protein uS3c (rps3) (Lepidium virginicum (Virginia pepperweed)).